The primary structure comprises 483 residues: Membrane-bound lytic murein transglycosylase F (483 aa).

A signal peptide spans 1–18; sequence MKGLIARFIAGFALLLWA. The interval 19–267 is non-LT domain; the sequence is WDMVFPWQQL…RIEEKYFNHL (249 aa). Residues 269 to 483 form an LT domain region; that stretch reads HFDYVDIQSY…SKESDSTLKE (215 aa). E312 is a catalytic residue. The disordered stretch occupies residues 458 to 483; the sequence is QQIQNNEEQPSVPQEISKESDSTLKE. The segment covering 473–483 has biased composition (basic and acidic residues); sequence ISKESDSTLKE.

In the N-terminal section; belongs to the bacterial solute-binding protein 3 family. This sequence in the C-terminal section; belongs to the transglycosylase Slt family.

It is found in the cell outer membrane. It catalyses the reaction Exolytic cleavage of the (1-&gt;4)-beta-glycosidic linkage between N-acetylmuramic acid (MurNAc) and N-acetylglucosamine (GlcNAc) residues in peptidoglycan, from either the reducing or the non-reducing ends of the peptidoglycan chains, with concomitant formation of a 1,6-anhydrobond in the MurNAc residue.. In terms of biological role, murein-degrading enzyme that degrades murein glycan strands and insoluble, high-molecular weight murein sacculi, with the concomitant formation of a 1,6-anhydromuramoyl product. Lytic transglycosylases (LTs) play an integral role in the metabolism of the peptidoglycan (PG) sacculus. Their lytic action creates space within the PG sacculus to allow for its expansion as well as for the insertion of various structures such as secretion systems and flagella. The protein is Membrane-bound lytic murein transglycosylase F of Actinobacillus pleuropneumoniae serotype 3 (strain JL03).